Consider the following 287-residue polypeptide: Leucine-rich repeat-containing protein 72 (287 aa).

4 LRR repeats span residues 46 to 67, 68 to 89, 90 to 111, and 112 to 133; these read DVFE…SRFK, KLKY…TRNY, CLTE…HYLP, and SLHI…VKEL. The LRRCT domain maps to 147–185; sequence NPLCQYNLYRLYIIYHLPGVELLDRNQVTEKERRSMITI.

The protein is Leucine-rich repeat-containing protein 72 (LRRC72) of Homo sapiens (Human).